The sequence spans 271 residues: Glutamate racemase (271 aa).

Substrate contacts are provided by residues 12 to 13 (DS) and 44 to 45 (YG). The active-site Proton donor/acceptor is Cys75. 76–77 (NT) contacts substrate. Residue Cys185 is the Proton donor/acceptor of the active site. Residue 186 to 187 (TH) coordinates substrate.

This sequence belongs to the aspartate/glutamate racemases family.

The enzyme catalyses L-glutamate = D-glutamate. Its pathway is cell wall biogenesis; peptidoglycan biosynthesis. In terms of biological role, provides the (R)-glutamate required for cell wall biosynthesis. This Mycobacterium marinum (strain ATCC BAA-535 / M) protein is Glutamate racemase.